The following is a 120-amino-acid chain: Ribosome-binding factor A (120 aa).

It belongs to the RbfA family. Monomer. Binds 30S ribosomal subunits, but not 50S ribosomal subunits or 70S ribosomes.

The protein resides in the cytoplasm. Functionally, one of several proteins that assist in the late maturation steps of the functional core of the 30S ribosomal subunit. Associates with free 30S ribosomal subunits (but not with 30S subunits that are part of 70S ribosomes or polysomes). Required for efficient processing of 16S rRNA. May interact with the 5'-terminal helix region of 16S rRNA. The polypeptide is Ribosome-binding factor A (Rickettsia africae (strain ESF-5)).